A 59-amino-acid polypeptide reads, in one-letter code: Large ribosomal subunit protein bL32 (59 aa).

It belongs to the bacterial ribosomal protein bL32 family.

In Lactiplantibacillus plantarum (strain ATCC BAA-793 / NCIMB 8826 / WCFS1) (Lactobacillus plantarum), this protein is Large ribosomal subunit protein bL32.